The sequence spans 1023 residues: 2-oxoglutarate dehydrogenase complex component E1 (1023 aa).

The transit peptide at 1 to 40 directs the protein to the mitochondrion; it reads MFHLRTCAAKLRPLTASQTVKTFSQNRPAAARTFQQIRCY. Residue lysine 74 is modified to N6-succinyllysine. Serine 100 is modified (phosphoserine). 3 residues coordinate Ca(2+): histidine 143, aspartate 156, and aspartate 158. Arginine 312 contributes to the thiamine diphosphate binding site. An N6-acetyllysine modification is found at lysine 401. Residues aspartate 411, asparagine 444, and isoleucine 446 each contribute to the thiamine diphosphate site. Mg(2+) contacts are provided by aspartate 411, asparagine 444, and isoleucine 446. A Glycyl lysine isopeptide (Lys-Gly) (interchain with G-Cter in ubiquitin) cross-link involves residue lysine 534. N6-succinyllysine is present on lysine 564. A thiamine diphosphate-binding site is contributed by glutamine 676. Lysine 970 bears the N6-acetyllysine mark.

Belongs to the alpha-ketoglutarate dehydrogenase family. Homodimer. The 2-oxoglutarate dehydrogenase complex is composed of OGDH (2-oxoglutarate dehydrogenase; E1), DLST (dihydrolipoamide succinyltransferase; E2), DLD (dihydrolipoamide dehydrogenase; E3) and the assembly factor KGD4. It contains multiple copies of the three enzymatic components (E1, E2 and E3). In the nucleus, the 2-oxoglutarate dehydrogenase complex associates with KAT2A. Interacts with ABHD11; this interaction maintains the functional lipoylation of the 2-oxoglutarate dehydrogenase complex. Thiamine diphosphate is required as a cofactor. Requires Mg(2+) as cofactor.

Its subcellular location is the mitochondrion. The protein resides in the nucleus. The enzyme catalyses N(6)-[(R)-lipoyl]-L-lysyl-[protein] + 2-oxoglutarate + H(+) = N(6)-[(R)-S(8)-succinyldihydrolipoyl]-L-lysyl-[protein] + CO2. With respect to regulation, calcium ions and ADP stimulate, whereas ATP and NADH reduce catalytic activity. Functionally, 2-oxoglutarate dehydrogenase (E1o) component of the 2-oxoglutarate dehydrogenase complex (OGDHC). Participates in the first step, rate limiting for the overall conversion of 2-oxoglutarate to succinyl-CoA and CO(2) catalyzed by the whole OGDHC. Catalyzes the irreversible decarboxylation of 2-oxoglutarate (alpha-ketoglutarate) via the thiamine diphosphate (ThDP) cofactor and subsequent transfer of the decarboxylated acyl intermediate on an oxidized dihydrolipoyl group that is covalently amidated to the E2 enzyme (dihydrolipoyllysine-residue succinyltransferase or DLST). Plays a key role in the Krebs (citric acid) cycle, which is a common pathway for oxidation of fuel molecules, including carbohydrates, fatty acids, and amino acids. Can catalyze the decarboxylation of 2-oxoadipate in vitro, but at a much lower rate than 2-oxoglutarate. Mainly active in the mitochondrion. A fraction of the 2-oxoglutarate dehydrogenase complex also localizes in the nucleus and is required for lysine succinylation of histones: associates with KAT2A on chromatin and provides succinyl-CoA to histone succinyltransferase KAT2A. This is 2-oxoglutarate dehydrogenase complex component E1 from Macaca fascicularis (Crab-eating macaque).